Consider the following 89-residue polypeptide: DNA-directed RNA polymerase subunit omega (89 aa).

The protein belongs to the RNA polymerase subunit omega family. As to quaternary structure, the RNAP catalytic core consists of 2 alpha, 1 beta, 1 beta' and 1 omega subunit. When a sigma factor is associated with the core the holoenzyme is formed, which can initiate transcription.

It catalyses the reaction RNA(n) + a ribonucleoside 5'-triphosphate = RNA(n+1) + diphosphate. In terms of biological role, promotes RNA polymerase assembly. Latches the N- and C-terminal regions of the beta' subunit thereby facilitating its interaction with the beta and alpha subunits. This Idiomarina loihiensis (strain ATCC BAA-735 / DSM 15497 / L2-TR) protein is DNA-directed RNA polymerase subunit omega.